The following is a 300-amino-acid chain: Large ribosomal subunit protein bL9m (300 aa).

Belongs to the bacterial ribosomal protein bL9 family. Component of the mitochondrial large ribosomal subunit (mt-LSU). Mature N.crassa 74S mitochondrial ribosomes consist of a small (37S) and a large (54S) subunit. The 37S small subunit contains a 16S ribosomal RNA (16S mt-rRNA) and 32 different proteins. The 54S large subunit contains a 23S rRNA (23S mt-rRNA) and 42 different proteins.

It is found in the mitochondrion. Component of the mitochondrial ribosome (mitoribosome), a dedicated translation machinery responsible for the synthesis of mitochondrial genome-encoded proteins, including at least some of the essential transmembrane subunits of the mitochondrial respiratory chain. The mitoribosomes are attached to the mitochondrial inner membrane and translation products are cotranslationally integrated into the membrane. This Neurospora crassa (strain ATCC 24698 / 74-OR23-1A / CBS 708.71 / DSM 1257 / FGSC 987) protein is Large ribosomal subunit protein bL9m (mrpl50).